A 615-amino-acid chain; its full sequence is Semenogelin-1 (615 aa).

An N-terminal signal peptide occupies residues Met-1–Gly-23. Pyrrolidone carboxylic acid is present on Gln-24. 3 disordered regions span residues Gln-24–Lys-118, Gly-133–Ser-160, and Gly-172–Tyr-585. Polar residues predominate over residues Ser-34–Gln-46. The span at Ala-50–Arg-80 shows a compositional bias: basic and acidic residues. The span at Thr-81 to Asn-91 shows a compositional bias: polar residues. Residues Phe-107 to Lys-118 show a composition bias toward basic and acidic residues. 3 stretches are compositionally biased toward polar residues: residues Gly-138–Ser-160, Ser-177–Leu-196, and Thr-209–Glu-224. N-linked (GlcNAc...) asparagine glycans are attached at residues Asn-148, Asn-184, and Asn-223. A compositionally biased stretch (basic and acidic residues) spans Gln-241–Phe-253. A compositionally biased stretch (polar residues) spans Ser-254 to Gln-265. N-linked (GlcNAc...) asparagine glycans are attached at residues Asn-258 and Asn-275. Residues Thr-283–Ser-300 are compositionally biased toward basic and acidic residues. The N-linked (GlcNAc...) asparagine glycan is linked to Asn-306. The segment covering Thr-308–Gln-317 has biased composition (basic and acidic residues). An N-linked (GlcNAc...) asparagine glycan is attached at Asn-332. Residues Thr-341 to Ser-358 show a composition bias toward basic and acidic residues. An N-linked (GlcNAc...) asparagine glycan is attached at Asn-364. Over residues Thr-366–Gln-375 the composition is skewed to basic and acidic residues. Residue Asn-390 is glycosylated (N-linked (GlcNAc...) asparagine). Positions Thr-399–Ser-416 are enriched in basic and acidic residues. Asn-422 carries N-linked (GlcNAc...) asparagine glycosylation. Residues Thr-424–Gln-433 are compositionally biased toward basic and acidic residues. A glycan (N-linked (GlcNAc...) asparagine) is linked at Asn-448. Positions Thr-457–Ser-474 are enriched in basic and acidic residues. N-linked (GlcNAc...) asparagine glycosylation is present at Asn-480. Positions Lys-481–Gln-491 are enriched in basic and acidic residues. The N-linked (GlcNAc...) asparagine glycan is linked to Asn-506. The segment covering Thr-515–Ser-532 has biased composition (basic and acidic residues). Asn-538 is a glycosylation site (N-linked (GlcNAc...) asparagine). Over residues Lys-539 to Gln-549 the composition is skewed to basic and acidic residues. The segment covering Lys-550 to Gln-563 has biased composition (polar residues).

Belongs to the semenogelin family. As to quaternary structure, occurs in disulfide-linked complexes. Post-translationally, transglutaminase substrate. Rapidly cleaved after ejaculation by KLK3/PSA, resulting in liquefaction of the semen coagulum and the progressive release of motile spermatozoa.

Its subcellular location is the secreted. Predominant protein in semen. It participates in the formation of a gel matrix entrapping the accessory gland secretions and ejaculated spermatozoa. Fragments of semenogelin and/or fragments of the related proteins may contribute to the activation of progressive sperm movements as the gel-forming proteins are fragmented by KLK3/PSA. This Saguinus oedipus (Cotton-top tamarin) protein is Semenogelin-1 (SEMG1).